A 534-amino-acid chain; its full sequence is Glucans biosynthesis protein D (534 aa).

The tat-type signal signal peptide spans 1-26 (MQRRDFIRNASLALAAFGLPSLPACA).

This sequence belongs to the OpgD/OpgG family. Predicted to be exported by the Tat system. The position of the signal peptide cleavage has not been experimentally proven.

It localises to the periplasm. It participates in glycan metabolism; osmoregulated periplasmic glucan (OPG) biosynthesis. In terms of biological role, probably involved in the control of the structural glucose backbone of osmoregulated periplasmic glucans (OPGs). This is Glucans biosynthesis protein D from Stenotrophomonas maltophilia (strain K279a).